Reading from the N-terminus, the 296-residue chain is tRNA dimethylallyltransferase (296 aa).

9–16 (GPTAVGKT) is an ATP binding site. Position 11–16 (11–16 (TAVGKT)) interacts with substrate. The segment at 34-37 (DSRQ) is interaction with substrate tRNA.

Belongs to the IPP transferase family. Monomer. Mg(2+) serves as cofactor.

It catalyses the reaction adenosine(37) in tRNA + dimethylallyl diphosphate = N(6)-dimethylallyladenosine(37) in tRNA + diphosphate. Functionally, catalyzes the transfer of a dimethylallyl group onto the adenine at position 37 in tRNAs that read codons beginning with uridine, leading to the formation of N6-(dimethylallyl)adenosine (i(6)A). The chain is tRNA dimethylallyltransferase from Chloroflexus aurantiacus (strain ATCC 29366 / DSM 635 / J-10-fl).